The sequence spans 434 residues: Alpha-enolase (434 aa).

Serine 40 lines the Mg(2+) pocket. Substrate is bound by residues histidine 158 and glutamate 167. Glutamate 210 acts as the Proton donor in catalysis. Mg(2+) contacts are provided by aspartate 245, glutamate 293, and aspartate 318. Substrate-binding residues include glutamate 293 and aspartate 318. Lysine 343 acts as the Proton acceptor in catalysis. Substrate-binding positions include 370–373 (SHRS) and lysine 394.

This sequence belongs to the enolase family. Homodimer. Mg(2+) serves as cofactor.

The protein resides in the cytoplasm. It carries out the reaction (2R)-2-phosphoglycerate = phosphoenolpyruvate + H2O. It functions in the pathway carbohydrate degradation; glycolysis; pyruvate from D-glyceraldehyde 3-phosphate: step 4/5. This is Alpha-enolase (eno1) from Xenopus laevis (African clawed frog).